The following is a 370-amino-acid chain: Cyclin-A3-4 (370 aa).

It belongs to the cyclin family. Cyclin AB subfamily. As to quaternary structure, interacts with FZR2/CCS52A1, FZR1/CCS52A2 and FZR3/CCS52B.

The chain is Cyclin-A3-4 (CYCA3-4) from Arabidopsis thaliana (Mouse-ear cress).